We begin with the raw amino-acid sequence, 505 residues long: ATP synthase subunit alpha, chloroplastic (505 aa).

Position 172–179 (172–179 (GDRQTGKT)) interacts with ATP.

This sequence belongs to the ATPase alpha/beta chains family. F-type ATPases have 2 components, CF(1) - the catalytic core - and CF(0) - the membrane proton channel. CF(1) has five subunits: alpha(3), beta(3), gamma(1), delta(1), epsilon(1). CF(0) has four main subunits: a, b, b' and c.

The protein resides in the plastid. The protein localises to the chloroplast thylakoid membrane. The catalysed reaction is ATP + H2O + 4 H(+)(in) = ADP + phosphate + 5 H(+)(out). Produces ATP from ADP in the presence of a proton gradient across the membrane. The alpha chain is a regulatory subunit. This chain is ATP synthase subunit alpha, chloroplastic, found in Antithamnion sp. (Red alga).